Here is a 340-residue protein sequence, read N- to C-terminus: MISVAVNGYGTIGKRVADAILKQPDMRLIGVAKTSPNYEAFIAHRKGIKIYVPQQSIKKFEESGIPVAGTIEDLVKASDIVVDTTPNGVGAQYKPIYQQFQRNAIFQGGEKAEVADISFSALCNYDEALGKKYIRVVSCNTTALLRTICTINKVTKVEKVRATIVRRAADQKEVKKGPINSLVPDPATVPSHHAKDVNSVIKNLDIVTMAVIAPTTLMHMHFINITLKDKVEKKDVLSVLENTPRIVLISSKYDAEATAELVEVARDLKRERNDIPEVMVFDDSVYVKDNEVMLMYAVHQESIVVPENVDAIRASTRLMSAEDSIRITNESLGILKGYLI.

NAD(+)-binding positions include T11–I12 and G109. Residue S138–N140 coordinates D-glyceraldehyde 3-phosphate. C139 serves as the catalytic Nucleophile. R167 contributes to the NAD(+) binding site. H193–A194 serves as a coordination point for D-glyceraldehyde 3-phosphate. Residue Q300 coordinates NAD(+).

This sequence belongs to the glyceraldehyde-3-phosphate dehydrogenase family. As to quaternary structure, homotetramer.

It localises to the cytoplasm. It carries out the reaction D-glyceraldehyde 3-phosphate + phosphate + NADP(+) = (2R)-3-phospho-glyceroyl phosphate + NADPH + H(+). The catalysed reaction is D-glyceraldehyde 3-phosphate + phosphate + NAD(+) = (2R)-3-phospho-glyceroyl phosphate + NADH + H(+). The protein operates within carbohydrate degradation; glycolysis; pyruvate from D-glyceraldehyde 3-phosphate: step 1/5. The protein is Glyceraldehyde-3-phosphate dehydrogenase of Saccharolobus islandicus (strain M.14.25 / Kamchatka #1) (Sulfolobus islandicus).